The chain runs to 121 residues: Ribonuclease P protein component (121 aa).

Belongs to the RnpA family. As to quaternary structure, consists of a catalytic RNA component (M1 or rnpB) and a protein subunit.

The catalysed reaction is Endonucleolytic cleavage of RNA, removing 5'-extranucleotides from tRNA precursor.. In terms of biological role, RNaseP catalyzes the removal of the 5'-leader sequence from pre-tRNA to produce the mature 5'-terminus. It can also cleave other RNA substrates such as 4.5S RNA. The protein component plays an auxiliary but essential role in vivo by binding to the 5'-leader sequence and broadening the substrate specificity of the ribozyme. This chain is Ribonuclease P protein component, found in Rickettsia prowazekii (strain Madrid E).